The primary structure comprises 190 residues: dCTP deaminase, dUMP-forming (190 aa).

DCTP-binding positions include 101–106 (KSSLGR), aspartate 119, 127–129 (TLE), glutamine 148, tyrosine 162, lysine 170, and glutamine 174. The active-site Proton donor/acceptor is glutamate 129. The interval 160–190 (HPYGSSRAGSKYQGQRGPTPSRSCQNFIRST) is disordered. Polar residues predominate over residues 171 to 190 (YQGQRGPTPSRSCQNFIRST).

The protein belongs to the dCTP deaminase family. As to quaternary structure, homotrimer.

The enzyme catalyses dCTP + 2 H2O = dUMP + NH4(+) + diphosphate. Its pathway is pyrimidine metabolism; dUMP biosynthesis; dUMP from dCTP: step 1/1. In terms of biological role, bifunctional enzyme that catalyzes both the deamination of dCTP to dUTP and the hydrolysis of dUTP to dUMP without releasing the toxic dUTP intermediate. This Mycobacterium bovis (strain ATCC BAA-935 / AF2122/97) protein is dCTP deaminase, dUMP-forming.